A 152-amino-acid polypeptide reads, in one-letter code: Ribosome maturation factor RimP (152 aa).

Belongs to the RimP family.

It localises to the cytoplasm. Its function is as follows. Required for maturation of 30S ribosomal subunits. The chain is Ribosome maturation factor RimP from Serratia proteamaculans (strain 568).